A 403-amino-acid chain; its full sequence is Dual-specificity RNA methyltransferase RlmN (403 aa).

A disordered region spans residues methionine 1–asparagine 25. The active-site Proton acceptor is the glutamate 112. Residues valine 123–aspartate 364 enclose the Radical SAM core domain. A disulfide bridge connects residues cysteine 130 and cysteine 370. [4Fe-4S] cluster is bound by residues cysteine 137, cysteine 141, and cysteine 144. Residues glycine 193–glutamate 194, serine 225, serine 247–histidine 249, and asparagine 327 each bind S-adenosyl-L-methionine. Catalysis depends on cysteine 370, which acts as the S-methylcysteine intermediate.

Belongs to the radical SAM superfamily. RlmN family. Requires [4Fe-4S] cluster as cofactor.

It is found in the cytoplasm. It carries out the reaction adenosine(2503) in 23S rRNA + 2 reduced [2Fe-2S]-[ferredoxin] + 2 S-adenosyl-L-methionine = 2-methyladenosine(2503) in 23S rRNA + 5'-deoxyadenosine + L-methionine + 2 oxidized [2Fe-2S]-[ferredoxin] + S-adenosyl-L-homocysteine. It catalyses the reaction adenosine(37) in tRNA + 2 reduced [2Fe-2S]-[ferredoxin] + 2 S-adenosyl-L-methionine = 2-methyladenosine(37) in tRNA + 5'-deoxyadenosine + L-methionine + 2 oxidized [2Fe-2S]-[ferredoxin] + S-adenosyl-L-homocysteine. Its function is as follows. Specifically methylates position 2 of adenine 2503 in 23S rRNA and position 2 of adenine 37 in tRNAs. m2A2503 modification seems to play a crucial role in the proofreading step occurring at the peptidyl transferase center and thus would serve to optimize ribosomal fidelity. The protein is Dual-specificity RNA methyltransferase RlmN of Psychrobacter sp. (strain PRwf-1).